We begin with the raw amino-acid sequence, 74 residues long: Porwaprin-a (74 aa).

The signal sequence occupies residues 1-24; sequence MSSGGLLLLLGLLTLWEVLTPVSS. In terms of domain architecture, WAP spans 27–71; sequence RPKKLGLCPPRPQKPCVKECKNDWSCPGQQKCCNYGCIDECRDPI. 4 disulfide bridges follow: C34-C59, C42-C63, C46-C58, and C52-C67.

The protein belongs to the venom waprin family. In terms of tissue distribution, expressed by the venom gland.

It localises to the secreted. Functionally, damages membranes of susceptible bacteria. Has no hemolytic activity. Not toxic to mice. Does not inhibit the proteinases elastase and cathepsin G. The protein is Porwaprin-a of Pseudechis porphyriacus (Red-bellied black snake).